The sequence spans 144 residues: Large ribosomal subunit protein uL15 (144 aa).

Residues 1–56 (MELNTLAPAPGAKSSKKRVGRGIGSGLGKTGGRGHKGQKSRSGGSVKPGFEGGQMP) form a disordered region. Residues 21 to 31 (RGIGSGLGKTG) show a composition bias toward gly residues.

It belongs to the universal ribosomal protein uL15 family. Part of the 50S ribosomal subunit.

Binds to the 23S rRNA. The chain is Large ribosomal subunit protein uL15 from Idiomarina loihiensis (strain ATCC BAA-735 / DSM 15497 / L2-TR).